Here is a 323-residue protein sequence, read N- to C-terminus: Cyclin-D5-1 (323 aa).

Disordered regions lie at residues 17-36 (ESSL…KQEP) and 281-323 (HMTP…MRRL).

Belongs to the cyclin family. Cyclin D subfamily.

The sequence is that of Cyclin-D5-1 (CYCD5-1) from Arabidopsis thaliana (Mouse-ear cress).